A 398-amino-acid polypeptide reads, in one-letter code: Formate-dependent phosphoribosylglycinamide formyltransferase (398 aa).

Residues 21 to 22 (EL) and glutamate 81 contribute to the N(1)-(5-phospho-beta-D-ribosyl)glycinamide site. ATP-binding positions include arginine 113, lysine 154, 194–197 (EEYV), and glutamate 202. One can recognise an ATP-grasp domain in the interval 118–314 (RFAAEKVKVP…EFQVHVRSAL (197 aa)). Residues glutamate 273 and glutamate 285 each coordinate Mg(2+). N(1)-(5-phospho-beta-D-ribosyl)glycinamide contacts are provided by residues aspartate 292, lysine 362, and 369–370 (RR).

This sequence belongs to the PurK/PurT family. In terms of assembly, homodimer.

It carries out the reaction N(1)-(5-phospho-beta-D-ribosyl)glycinamide + formate + ATP = N(2)-formyl-N(1)-(5-phospho-beta-D-ribosyl)glycinamide + ADP + phosphate + H(+). The protein operates within purine metabolism; IMP biosynthesis via de novo pathway; N(2)-formyl-N(1)-(5-phospho-D-ribosyl)glycinamide from N(1)-(5-phospho-D-ribosyl)glycinamide (formate route): step 1/1. In terms of biological role, involved in the de novo purine biosynthesis. Catalyzes the transfer of formate to 5-phospho-ribosyl-glycinamide (GAR), producing 5-phospho-ribosyl-N-formylglycinamide (FGAR). Formate is provided by PurU via hydrolysis of 10-formyl-tetrahydrofolate. The chain is Formate-dependent phosphoribosylglycinamide formyltransferase from Sulfolobus acidocaldarius (strain ATCC 33909 / DSM 639 / JCM 8929 / NBRC 15157 / NCIMB 11770).